Reading from the N-terminus, the 931-residue chain is Myelin regulatory factor homolog 1 (931 aa).

Residues 1–658 are Cytoplasmic-facing; it reads MSSSDLLKGE…SCGSRLSQGT (658 aa). Positions 29–143 are disordered; the sequence is TDEDDGSMVS…QQHQQTRGGN (115 aa). The segment covering 37 to 52 has biased composition (polar residues); the sequence is VSPTSSADSMHQNLGV. The segment covering 53-68 has biased composition (low complexity); it reads QQQQQQMLQAQQRQNQ. Polar residues predominate over residues 117 to 126; the sequence is DNGNQTMNNI. The span at 127–138 shows a compositional bias: low complexity; it reads QSQQLSQQQHQQ. Positions 169–436 form a DNA-binding region, NDT80; that stretch reads GTAAVNQPTN…TNPGSFEPQD (268 aa). The Peptidase S74 domain occupies 483–582; the sequence is SDIRLKEAIT…RMTGDLDSKI (100 aa). The helical transmembrane segment at 659 to 679 threads the bilayer; it reads VVTLVSIMAACLLAMSALYVL. The Lumenal segment spans residues 680-931; that stretch reads DWHNRNYGYH…FYRMCTLSSS (252 aa). Residues Asn797 and Asn912 are each glycosylated (N-linked (GlcNAc...) asparagine).

Belongs to the MRF family. Homotrimer. Interacts with myrf-2. Interacts (via C-terminus) with pan-1 (via LRR regions); the interaction promotes the role of myrf-1 in the synaptic remodeling of DD GABAergic motor neurons at the cell membrane. In terms of processing, myelin regulatory factor: Follows autocatalytic cleavage via the peptidase S74 domain. Autoprocessing is apparently constitutive and is essential for transcriptional activity. Widely expressed in many tissues, including neuronal, muscle and epidermal stem cells. In neurons, expressed in dorsal D (DD) GABAergic motor neurons.

It is found in the endoplasmic reticulum membrane. It localises to the nucleus. The protein localises to the apical cell membrane. The protein resides in the cytoplasm. Functionally, constitutes a precursor of the transcription factor. Mediates the autocatalytic cleavage that releases the Myelin regulatory factor homolog 1, N-terminal component that specifically activates transcription of genes involved in synaptic rewiring during nervous system maturation. Membrane-bound part that has no transcription factor activity and remains attached to the endoplasmic reticulum membrane following cleavage. Its function is as follows. Transcription factor that specifically activates expression of genes involved in synaptic rewiring during nervous system maturation. Specifically required for dorsal D (DD) GABAergic motor neurons synaptic rewiring. Acts in complex with myrf-2 paralog. The polypeptide is Myelin regulatory factor homolog 1 (Caenorhabditis elegans).